We begin with the raw amino-acid sequence, 309 residues long: Carboxylesterase Culp6 homolog (309 aa).

Residues 5–25 (ITVIAVLIVLALIGVGIVQYV) form a helical membrane-spanning segment. The cysteines at positions 55 and 146 are disulfide-linked. Catalysis depends on residues Ser-157, Asp-253, and His-279. A disulfide bridge connects residues Cys-249 and Cys-256.

Belongs to the cutinase family.

The protein resides in the cell membrane. The catalysed reaction is a butanoate ester + H2O = an aliphatic alcohol + butanoate + H(+). With respect to regulation, inhibited by tetrahydrolipstatin (THL), a specific lipase inhibitor. Functionally, esterase that may be involved in cell wall biosynthesis and/or maintenance. Hydrolyzes pNP-butyrate (C4). This is Carboxylesterase Culp6 homolog from Corynebacterium glutamicum (strain ATCC 13032 / DSM 20300 / JCM 1318 / BCRC 11384 / CCUG 27702 / LMG 3730 / NBRC 12168 / NCIMB 10025 / NRRL B-2784 / 534).